The chain runs to 132 residues: Small ribosomal subunit protein uS8 (132 aa).

It belongs to the universal ribosomal protein uS8 family. As to quaternary structure, part of the 30S ribosomal subunit. Contacts proteins S5 and S12.

Its function is as follows. One of the primary rRNA binding proteins, it binds directly to 16S rRNA central domain where it helps coordinate assembly of the platform of the 30S subunit. The protein is Small ribosomal subunit protein uS8 of Rhodospirillum rubrum (strain ATCC 11170 / ATH 1.1.1 / DSM 467 / LMG 4362 / NCIMB 8255 / S1).